A 297-amino-acid polypeptide reads, in one-letter code: GTP-binding protein REM 1 (297 aa).

The span at 1 to 10 (MTLNTQQEAK) shows a compositional bias: polar residues. The interval 1–73 (MTLNTQQEAK…DGWSSESSDS (73 aa)) is disordered. A Phosphoserine modification is found at serine 51. Residues 64–73 (DGWSSESSDS) show a composition bias toward low complexity. Residues 87–94 (GDPGVGKT) and 194–197 (NKAD) each bind GTP. The segment at 267 to 286 (ARRFLARLTARSARRRALKA) is calmodulin-binding.

It belongs to the small GTPase superfamily. RGK family. In terms of assembly, in vitro, interacts with calmodulin in a calcium-dependent manner. Interacts 14-3-3 family members including YWHAE, YWHAH, YWHAQ, YWHAZ in a phosphorylation-dependent manner. In terms of tissue distribution, high expression in cardiac muscle. Moderate expression in lung, skeletal muscle and kidney. Low levels in spleen and brain.

Functionally, promotes endothelial cell sprouting and actin cytoskeletal reorganization. May be involved in angiogenesis. May function in Ca(2+) signaling. This is GTP-binding protein REM 1 (Rem1) from Mus musculus (Mouse).